The following is a 551-amino-acid chain: Cytochrome c lysine N-methyltransferase 1 (551 aa).

The SET domain maps to aspartate 46 to lysine 273. The SET-like stretch occupies residues isoleucine 184–aspartate 288.

Belongs to the class V-like SAM-binding methyltransferase superfamily.

It is found in the cytoplasm. It localises to the cytosol. It catalyses the reaction L-lysyl-[cytochrome c] + S-adenosyl-L-methionine = N(6)-methyl-L-lysyl-[cytochrome c] + S-adenosyl-L-homocysteine + H(+). Functionally, methyltransferase which mediates trimethylation of cytochrome c (CYC1). The chain is Cytochrome c lysine N-methyltransferase 1 (CTM1) from Candida glabrata (strain ATCC 2001 / BCRC 20586 / JCM 3761 / NBRC 0622 / NRRL Y-65 / CBS 138) (Yeast).